The following is a 117-amino-acid chain: MKGNIGIAVFYMLLLLLPTDSIGKKMEEEQEKLFRQKRNPLIPAIYIGATVGPSVWAYLVALVGAAAVTAANIRRASSDNHSCAGNRGWCRSKCFRHEYVDTYYSAVCGRYFCCRSR.

A signal peptide spans 1–23 (MKGNIGIAVFYMLLLLLPTDSIG). Positions 26–36 (MEEEQEKLFRQ) are excised as a propeptide. 3 cysteine pairs are disulfide-bonded: C83/C113, C90/C108, and C94/C114.

Belongs to the big defensin family. Interacts with intracellular coagulation inhibitor 1/LICI-1. Expressed in all tissues examined, including hemocytes, heart, hepatopancreas, stomach, intestine and skeletal muscle.

It is found in the secreted. Significantly inhibits the growth of Gram-negative and Gram-positive bacteria and fungi in vitro. The protein is Big defensin of Tachypleus tridentatus (Japanese horseshoe crab).